The following is a 378-amino-acid chain: 1-acyl-sn-glycerol-3-phosphate acyltransferase delta (378 aa).

Residues 11 to 31 (FLCHLVFCYVFIASGLIINTI) traverse the membrane as a helical segment. Residues 96 to 101 (HKFEID) carry the HXXXXD motif motif. A run of 3 helical transmembrane segments spans residues 125–145 (ELAY…VFCS), 307–327 (TLVN…QFLV), and 338–358 (LASF…MIGV).

Belongs to the 1-acyl-sn-glycerol-3-phosphate acyltransferase family.

The protein resides in the endoplasmic reticulum membrane. It catalyses the reaction a 1-acyl-sn-glycero-3-phosphate + an acyl-CoA = a 1,2-diacyl-sn-glycero-3-phosphate + CoA. The enzyme catalyses (4Z,7Z,10Z,13Z,16Z,19Z)-docosahexaenoyl-CoA + 1-hexadecanoyl-sn-glycero-3-phosphate = 1-hexadecanoyl-2-(4Z,7Z,10Z,13Z,16Z,19Z-docosahexaenoyl)-sn-glycero-3-phosphate + CoA. It carries out the reaction 1-octadecanoyl-sn-glycero-3-phosphate + (9Z,12Z)-octadecadienoyl-CoA = 1-octadecanoyl-2-(9Z,12Z-octadecadienoyl)-sn-glycero-3-phosphate + CoA. The catalysed reaction is 1-octadecanoyl-sn-glycero-3-phosphate + (4Z,7Z,10Z,13Z,16Z,19Z)-docosahexaenoyl-CoA = 1-octadecanoyl-2-(4Z,7Z,10Z,13Z,16Z,19Z-docosahexaenoyl)-sn-glycero-3-phosphate + CoA. It catalyses the reaction (4Z,7Z,10Z,13Z,16Z,19Z)-docosahexaenoyl-CoA + 1-(9Z-octadecenoyl)-sn-glycero-3-phosphate = 1-(9Z-octadecenoyl)-2-(4Z,7Z,10Z,13Z,16Z,19Z-docosahexaenoyl)-sn-glycero-3-phosphate + CoA. The protein operates within phospholipid metabolism; CDP-diacylglycerol biosynthesis; CDP-diacylglycerol from sn-glycerol 3-phosphate: step 2/3. Functionally, converts 1-acyl-sn-glycerol-3-phosphate (lysophosphatidic acid or LPA) into 1,2-diacyl-sn-glycerol-3-phosphate (phosphatidic acid or PA) by incorporating an acyl moiety at the sn-2 position of the glycerol backbone. Exhibits high acyl-CoA specificity for polyunsaturated fatty acyl-CoA, especially docosahexaenoyl-CoA (22:6-CoA, DHA-CoA). This is 1-acyl-sn-glycerol-3-phosphate acyltransferase delta (AGPAT4) from Pongo abelii (Sumatran orangutan).